We begin with the raw amino-acid sequence, 472 residues long: Eukaryotic translation initiation factor 2 subunit 3 (472 aa).

The region spanning 39-247 (QATINIGTIG…YIVNKIPVPV (209 aa)) is the tr-type G domain. The G1 stretch occupies residues 48–55 (GHVAHGKS). 51-56 (AHGKST) is a binding site for GTP. Residues 76 to 80 (NITIK) are G2. Positions 134–137 (DCPG) are G3. GTP contacts are provided by residues 190 to 193 (NKID) and 225 to 227 (SAQ). The segment at 190–193 (NKID) is G4. Residues 225 to 227 (SAQ) are G5. An interacts with cdc123 region spans residues 457–469 (GQIRRGVTITPTV).

It belongs to the TRAFAC class translation factor GTPase superfamily. Classic translation factor GTPase family. EIF2G subfamily. In terms of assembly, eukaryotic translation initiation factor 2 eIF2 is a heterotrimeric complex composed of an alpha (EIF2S1), a beta (EIF2S2) and a gamma (EIF2S3) chain. eIF2 is member of the 43S pre-initiation complex (43S PIC).

The protein resides in the cytoplasm. It is found in the cytosol. The enzyme catalyses GTP + H2O = GDP + phosphate + H(+). In terms of biological role, member of the eIF2 complex that functions in the early steps of protein synthesis by forming a ternary complex with GTP and initiator tRNA. This complex binds to a 40S ribosomal subunit, followed by mRNA binding to form the 43S pre-initiation complex (43S PIC). Junction of the 60S ribosomal subunit to form the 80S initiation complex is preceded by hydrolysis of the GTP bound to eIF2 and release of an eIF2-GDP binary complex. In order for eIF2 to recycle and catalyze another round of initiation, the GDP bound to eIF2 must exchange with GTP by way of a reaction catalyzed by eIF-2B. This chain is Eukaryotic translation initiation factor 2 subunit 3, found in Danio rerio (Zebrafish).